The chain runs to 133 residues: p53 and DNA damage-regulated protein 1 (133 aa).

It belongs to the prefoldin subunit beta family. Component of the PAQosome complex which is responsible for the biogenesis of several protein complexes and which consists of R2TP complex members RUVBL1, RUVBL2, RPAP3 and PIH1D1, URI complex members PFDN2, PFDN6, PDRG1, UXT and URI1 as well as ASDURF, POLR2E and DNAAF10/WDR92.

It localises to the cytoplasm. Its function is as follows. May play a role in chaperone-mediated protein folding. The protein is p53 and DNA damage-regulated protein 1 (PDRG1) of Pongo abelii (Sumatran orangutan).